The sequence spans 218 residues: Kappa-scoloptoxin(11)-Ssd1b (218 aa).

Residues 1-16 form the signal peptide; sequence MFYSHLLFFTFTFACS. A propeptide spanning residues 17 to 25 is cleaved from the precursor; sequence SSLNRKTKR.

Contains 8 disulfide bonds. As to expression, expressed by the venom gland.

It is found in the secreted. Its function is as follows. Voltage-gated potassium channel inhibitor. This is Kappa-scoloptoxin(11)-Ssd1b from Scolopendra dehaani (Thai centipede).